The chain runs to 392 residues: MKCAGQIEARAVEESSINLDPIQAAGRLTPEAMKAVIAWGDGYSVCDNCHKPFRLDYVTKPPIADFHEEAAKWLGMDKIQLVPGARRAFQEVTGALVGKGEPVIMTGMGHYTAYLSVEVVNGVVREIRPTADHHITADAAAESIENAVREFGYAPKLVFVDAVDFMYGNMHEVEKIAKVAHQYDIPVLYNGVYTVGVLPVDGKKLGVDFVVGSGHKSMAAPAPSGILATTDEYAEIVLRTTKIQGDITGRKFGIKQVGILGCSLMGDPAVGLIASFPRVKERVNHFDEELKNHKIVTDALLSIEGTKVASEYPRKHTLTRMDTAGSFDVIARTHKKRGFFLSSALNKRGITGIMPGVTKQWKFNTYGLTKTQAEYLADSFIEIAEENSMVVG.

Pyridoxal 5'-phosphate is bound by residues 85 to 86 (AR), N190, and 213 to 215 (SGH). Position 216 is an N6-(pyridoxal phosphate)lysine (K216).

Belongs to the SepCysS family. Homodimer. Interacts with SepRS. The cofactor is pyridoxal 5'-phosphate.

The catalysed reaction is O-phospho-L-seryl-tRNA(Cys) + hydrogen sulfide + H(+) = L-cysteinyl-tRNA(Cys) + phosphate. Converts O-phospho-L-seryl-tRNA(Cys) (Sep-tRNA(Cys)) to L-cysteinyl-tRNA(Cys) (Cys-tRNA(Cys)). The polypeptide is O-phospho-L-seryl-tRNA:Cys-tRNA synthase 2 (Methanocorpusculum labreanum (strain ATCC 43576 / DSM 4855 / Z)).